Here is a 227-residue protein sequence, read N- to C-terminus: uncharacterized protein (227 aa).

An N-terminal signal peptide occupies residues 1-25; sequence MLIMKKLLLIAATSATMLSSSVSFA.

The protein to R.conorii RC1281.

This is an uncharacterized protein from Rickettsia conorii (strain ATCC VR-613 / Malish 7).